A 266-amino-acid chain; its full sequence is Dolichol-phosphate mannosyltransferase subunit 1 (266 aa).

The segment covering 1–19 has biased composition (low complexity); sequence MASPGASRGASAATAAAAS. Residues 1–31 form a disordered region; the sequence is MASPGASRGASAATAAAASPRPPQGRSSRRD. A2 carries the N-acetylalanine modification. Position 3 is a phosphoserine (S3). GDP-alpha-D-mannose is bound by residues P38, Y40, E42, I69, D71, D124, A125, D126, R153, R240, and K246. D126 serves as a coordination point for Mg(2+). A Mn(2+)-binding site is contributed by D126.

The protein belongs to the glycosyltransferase 2 family. Component of the dolichol-phosphate mannose (DPM) synthase complex composed of DPM1, DPM2 and DPM3; within the complex, directly interacts with DPM3. This interaction may stabilize DPM1. The cofactor is Mg(2+). It depends on Mn(2+) as a cofactor. Ca(2+) serves as cofactor.

It is found in the endoplasmic reticulum. It catalyses the reaction a di-trans,poly-cis-dolichyl phosphate + GDP-alpha-D-mannose = a di-trans,poly-cis-dolichyl beta-D-mannosyl phosphate + GDP. It participates in protein modification; protein glycosylation. Functionally, transfers mannose from GDP-mannose to dolichol monophosphate to form dolichol phosphate mannose (Dol-P-Man) which is the mannosyl donor in pathways leading to N-glycosylation, glycosyl phosphatidylinositol membrane anchoring, and O-mannosylation of proteins; catalytic subunit of the dolichol-phosphate mannose (DPM) synthase complex. This chain is Dolichol-phosphate mannosyltransferase subunit 1 (DPM1), found in Cricetulus griseus (Chinese hamster).